Consider the following 667-residue polypeptide: Smc-like protein Sph2 (667 aa).

Coiled-coil stretches lie at residues 153–295 (GSIQ…SLAT) and 355–517 (GRLD…AITA).

The protein belongs to the Sph1/Sph2 family.

It localises to the cytoplasm. Its function is as follows. May play a role in replication. The sequence is that of Smc-like protein Sph2 (sph2) from Halobacterium salinarum (strain ATCC 29341 / DSM 671 / R1).